The sequence spans 335 residues: Glycerol-3-phosphate dehydrogenase [NAD(P)+] (335 aa).

NADPH-binding residues include S15, Y16, H36, and K110. Sn-glycerol 3-phosphate contacts are provided by K110, G139, and T141. A143 is an NADPH binding site. Sn-glycerol 3-phosphate contacts are provided by K195, D248, S258, R259, and N260. The Proton acceptor role is filled by K195. R259 contacts NADPH. Residues V283 and E285 each contribute to the NADPH site.

The protein belongs to the NAD-dependent glycerol-3-phosphate dehydrogenase family.

It is found in the cytoplasm. The enzyme catalyses sn-glycerol 3-phosphate + NAD(+) = dihydroxyacetone phosphate + NADH + H(+). It carries out the reaction sn-glycerol 3-phosphate + NADP(+) = dihydroxyacetone phosphate + NADPH + H(+). It functions in the pathway membrane lipid metabolism; glycerophospholipid metabolism. Catalyzes the reduction of the glycolytic intermediate dihydroxyacetone phosphate (DHAP) to sn-glycerol 3-phosphate (G3P), the key precursor for phospholipid synthesis. This chain is Glycerol-3-phosphate dehydrogenase [NAD(P)+], found in Haemophilus influenzae (strain 86-028NP).